The primary structure comprises 631 residues: Sphingomyelin phosphodiesterase (631 aa).

The disordered stretch occupies residues 1 to 23 (MPRYGASLRQSCPRSGREQGQDG). Positions 1–46 (MPRYGASLRQSCPRSGREQGQDGTAGAPGLLWMGLVLALALALALA) are cleaved as a signal peptide. In terms of domain architecture, Saposin B-type spans 87-171 (GNLTCPICKG…LLGSTCGHWD (85 aa)). An N-linked (GlcNAc...) asparagine glycan is attached at asparagine 88. 3 cysteine pairs are disulfide-bonded: cysteine 91–cysteine 167, cysteine 94–cysteine 159, and cysteine 122–cysteine 133. A glycan (N-linked (GlcNAc...) asparagine) is linked at asparagine 177. Zn(2+) contacts are provided by aspartate 208 and histidine 210. Intrachain disulfides connect cysteine 223-cysteine 228 and cysteine 229-cysteine 252. The Zn(2+) site is built by aspartate 280 and asparagine 320. Asparagine 337 and asparagine 397 each carry an N-linked (GlcNAc...) asparagine glycan. Cysteine 387 and cysteine 433 are joined by a disulfide. Zn(2+)-binding residues include histidine 427, histidine 459, and histidine 461. Asparagine 505 carries N-linked (GlcNAc...) asparagine glycosylation. Serine 510 bears the Phosphoserine; by PKC/PRKCD mark. Asparagine 522 is a glycosylation site (N-linked (GlcNAc...) asparagine). Disulfide bonds link cysteine 586-cysteine 590 and cysteine 596-cysteine 609.

This sequence belongs to the acid sphingomyelinase family. As to quaternary structure, monomer. Interacts with SORT1; the interaction is required for SMPD1 targeting to lysosomes. It depends on Zn(2+) as a cofactor. Proteolytically processed. Mature lysosomal form arises from C-terminal proteolytic processing of pro-sphingomyelin phosphodiesterase. In terms of processing, this form is generated following cleavage by CASP7 in the extracellular milieu. It shows increased activity. Post-translationally, both lysosomal and secreted forms are glycosylated but they show a differential pattern of glycosylation. Phosphorylated at Ser-510 by PRKCD upon stress stimuli. Phosphorylation is required for secretion.

Its subcellular location is the lysosome. It is found in the lipid droplet. The protein resides in the secreted. It localises to the extracellular space. The enzyme catalyses a sphingomyelin + H2O = phosphocholine + an N-acylsphing-4-enine + H(+). The catalysed reaction is N-(octadecanoyl)-sphing-4-enine-1-phosphocholine + H2O = N-octadecanoylsphing-4-enine + phosphocholine + H(+). It catalyses the reaction 1,2-dihexadecanoyl-sn-glycero-3-phosphocholine + H2O = 1,2-dihexadecanoyl-sn-glycerol + phosphocholine + H(+). It carries out the reaction a 1,2-diacyl-sn-glycero-3-phosphocholine + H2O = phosphocholine + a 1,2-diacyl-sn-glycerol + H(+). With respect to regulation, hydrolysis of liposomal sphingomyelin is stimulated by incorporation of diacylglycerol (DAG), ceramide and free fatty acids into the liposomal membranes. Phosphatidylcholine hydrolysis is inhibited by incorporation of cholesterol, ceramide, DAG, monoacylglycerol and fatty acids. Antidepressants, namely amitriptyline, imipramine, desipramine, fluoxetine, sertraline, escitalopram, and maprotiline inhibit sphingomyelin phosphodiesterase activity. Its activity is regulated as follows. (Microbial infection) The secretory form is activated by P.aeruginosa, this activation results in the release of ceramide in the outer leaflet of the plasma membrane. (Microbial infection) The secretory form is activated by human coronavirus SARS-CoV-2, this activation results in the release of ceramide in the outer leaflet of the plasma membrane. Converts sphingomyelin to ceramide. Exists as two enzymatic forms that arise from alternative trafficking of a single protein precursor, one that is targeted to the endolysosomal compartment, whereas the other is released extracellularly. However, in response to various forms of stress, lysosomal exocytosis may represent a major source of the secretory form. Functionally, in the lysosomes, converts sphingomyelin to ceramide. Plays an important role in the export of cholesterol from the intraendolysosomal membranes. Also has phospholipase C activities toward 1,2-diacylglycerolphosphocholine and 1,2-diacylglycerolphosphoglycerol. Modulates stress-induced apoptosis through the production of ceramide. Its function is as follows. When secreted, modulates cell signaling with its ability to reorganize the plasma membrane by converting sphingomyelin to ceramide. Secreted form is increased in response to stress and inflammatory mediators such as IL1B, IFNG or TNF as well as upon infection with bacteria and viruses. Produces the release of ceramide in the outer leaflet of the plasma membrane playing a central role in host defense. Ceramide reorganizes these rafts into larger signaling platforms that are required to internalize P.aeruginosa, induce apoptosis and regulate the cytokine response in infected cells. In wounded cells, the lysosomal form is released extracellularly in the presence of Ca(2+) and promotes endocytosis and plasma membrane repair. In terms of biological role, this form is generated following cleavage by CASP7 in the extracellular milieu in response to bacterial infection. It shows increased ability to convert sphingomyelin to ceramide and promotes plasma membrane repair. Plasma membrane repair by ceramide counteracts the action of gasdermin-D (GSDMD) perforin (PRF1) pores that are formed in response to bacterial infection. (Microbial infection) Secretion is activated by bacteria such as P.aeruginosa, N.gonorrhoeae and others, this activation results in the release of ceramide in the outer leaflet of the plasma membrane which facilitates the infection. Functionally, (Microbial infection) Secretion is activated by human coronaviruses SARS-CoV and SARS-CoV-2 as well as Zaire ebolavirus, this activation results in the release of ceramide in the outer leaflet of the plasma membrane which facilitates the infection. Its function is as follows. Lacks residues that bind the cofactor Zn(2+) and has no enzyme activity. The sequence is that of Sphingomyelin phosphodiesterase from Homo sapiens (Human).